The following is a 465-amino-acid chain: MGASRTGCYLLAVVLAAVMNAAIAGITSSFIRKVEKTVDMPLDSDVFRVPPGYNAPQQVHITQGDHVGKAMIVSWVTVDEPGSSKVVYWSENSQHKKVARGNIRTYTYFNYTSGYIHHCTIRNLEYNTKYYYEVGIGNTTRSFWFTTPPEVGPDVPYTFGLIGDLGQSFDSNRTLTHYERNPIKGQAVLFVGDLSYADNYPNHDNVRWDTWGRFVERSTAYQPWIWTAGNHEIDFAPEIGETKPFKPFTKRYHVPYKASGSTETFWYPIKRASAYIIVLSSYSAYGKYTPQYKWLEEELPKVNRTETPWLIVLMHSPWYNSYNYHYMEGETMRVMYEPWFVQHKVDLVFAGHVHAYERSERVSNVAYDIVNGKCTPVRDQSAPVYITIGDGGNLEGLATNMTDPQPEYSAFREASFGHATLDIKNRTHAYYSWHRNQDGYAVEADSMWVSNRFWHPVDDSTTTKL.

The N-terminal stretch at 1-32 (MGASRTGCYLLAVVLAAVMNAAIAGITSSFIR) is a signal peptide. N-linked (GlcNAc...) asparagine glycans are attached at residues Asn-110 and Asn-138. Fe cation is bound at residue Asp-164. Asn-172 is a glycosylation site (N-linked (GlcNAc...) asparagine). Positions 193 and 196 each coordinate Fe cation. Asp-193 contacts Mn(2+). A Mn(2+)-binding site is contributed by Asn-230. Residue Asn-230 coordinates substrate. The N-linked (GlcNAc...) asparagine glycan is linked to Asn-303. A Mn(2+)-binding site is contributed by His-315. The active-site Proton donor is His-325. His-352 provides a ligand contact to Mn(2+). Position 352 to 354 (352 to 354 (HVH)) interacts with substrate. His-354 provides a ligand contact to Fe cation. 2 N-linked (GlcNAc...) asparagine glycosylation sites follow: Asn-400 and Asn-425.

The protein belongs to the metallophosphoesterase superfamily. Purple acid phosphatase family. As to quaternary structure, homodimer; disulfide-linked. Fe cation serves as cofactor. Requires Mn(2+) as cofactor. Zn(2+) is required as a cofactor. It depends on Cu(2+) as a cofactor. The cofactor is Mg(2+).

It localises to the secreted. It catalyses the reaction a phosphate monoester + H2O = an alcohol + phosphate. The sequence is that of Purple acid phosphatase 2 (PAP2) from Ipomoea batatas (Sweet potato).